A 200-amino-acid chain; its full sequence is NADH-quinone oxidoreductase chain 10 (200 aa).

The next 5 membrane-spanning stretches (helical) occupy residues Met2–Ile22, Pro26–Leu46, Phe51–Val71, Leu90–Gly110, and Val144–Leu164.

The protein belongs to the complex I subunit 6 family. In terms of assembly, NDH-1 is composed of at least 14 different subunits, Nqo1 to Nqo14. The complex has a L-shaped structure, with the hydrophobic arm (subunits Nqo7, Nqo8, Nqo10 to Nqo14) embedded in the inner membrane and the hydrophilic peripheral arm (subunits Nqo1 to Nqo6, Nqo9) protruding into the bacterial cytoplasm. The hydrophilic domain contains all the redox centers.

It localises to the cell inner membrane. It catalyses the reaction a quinone + NADH + 5 H(+)(in) = a quinol + NAD(+) + 4 H(+)(out). Functionally, NDH-1 shuttles electrons from NADH, via FMN and iron-sulfur (Fe-S) centers, to quinones in the respiratory chain. The immediate electron acceptor for the enzyme in this species is believed to be ubiquinone. Couples the redox reaction to proton translocation (for every two electrons transferred, four hydrogen ions are translocated across the cytoplasmic membrane), and thus conserves the redox energy in a proton gradient. This chain is NADH-quinone oxidoreductase chain 10, found in Paracoccus denitrificans.